The chain runs to 233 residues: Large ribosomal subunit protein uL3 (233 aa).

The disordered stretch occupies residues 146 to 171 (GSQRASHGNSRSHRVPGSIGQAQDPG). Gln168 is modified (N5-methylglutamine).

It belongs to the universal ribosomal protein uL3 family. Part of the 50S ribosomal subunit. Forms a cluster with proteins L14 and L19. In terms of processing, methylated by PrmB.

Functionally, one of the primary rRNA binding proteins, it binds directly near the 3'-end of the 23S rRNA, where it nucleates assembly of the 50S subunit. This chain is Large ribosomal subunit protein uL3, found in Bordetella bronchiseptica (strain ATCC BAA-588 / NCTC 13252 / RB50) (Alcaligenes bronchisepticus).